The primary structure comprises 567 residues: Urease subunit alpha (567 aa).

The Urease domain occupies 129–567 (GGIDVHVHFI…VPMSQRYFLF (439 aa)). Residues His-134, His-136, and Lys-217 each contribute to the Ni(2+) site. Residue Lys-217 is modified to N6-carboxylysine. His-219 is a substrate binding site. Ni(2+) is bound by residues His-246 and His-272. The active-site Proton donor is the His-320. Asp-360 serves as a coordination point for Ni(2+).

It belongs to the metallo-dependent hydrolases superfamily. Urease alpha subunit family. In terms of assembly, heterotrimer of UreA (gamma), UreB (beta) and UreC (alpha) subunits. Three heterotrimers associate to form the active enzyme. Ni cation serves as cofactor. Post-translationally, carboxylation allows a single lysine to coordinate two nickel ions.

Its subcellular location is the cytoplasm. It catalyses the reaction urea + 2 H2O + H(+) = hydrogencarbonate + 2 NH4(+). Its pathway is nitrogen metabolism; urea degradation; CO(2) and NH(3) from urea (urease route): step 1/1. The polypeptide is Urease subunit alpha (Blochmanniella floridana).